Reading from the N-terminus, the 159-residue chain is Ubiquitin-conjugating enzyme E2 variant 1B (159 aa).

The UBC core domain maps to 11–159 (PRNFRLLEEL…KGLVVKCCVM (149 aa)).

Belongs to the ubiquitin-conjugating enzyme family. Heterodimer with UBC35 or UBC36. In terms of tissue distribution, expressed in roots, shoots, leaves, stems and flowers, but not in pollen.

In terms of biological role, has no ubiquitin ligase activity on its own. The heterodimer with UBC catalyzes the synthesis of non-canonical poly-ubiquitin chains that are linked through 'Lys-63'. This type of poly-ubiquitination does not lead to protein degradation by the proteasome. Mediates transcriptional activation of target genes. May play a role in the control of progress through the cell cycle and differentiation. May play a role in the error-free DNA repair pathway and contributes to the survival of cells after DNA damage. In Arabidopsis thaliana (Mouse-ear cress), this protein is Ubiquitin-conjugating enzyme E2 variant 1B (UEV1B).